We begin with the raw amino-acid sequence, 263 residues long: 3-methyl-2-oxobutanoate hydroxymethyltransferase (263 aa).

Residues aspartate 45 and aspartate 84 each contribute to the Mg(2+) site. Residues 45-46, aspartate 84, and lysine 112 each bind 3-methyl-2-oxobutanoate; that span reads DS. Residue glutamate 114 participates in Mg(2+) binding. Glutamate 181 functions as the Proton acceptor in the catalytic mechanism.

It belongs to the PanB family. As to quaternary structure, homodecamer; pentamer of dimers. The cofactor is Mg(2+).

The protein resides in the cytoplasm. The enzyme catalyses 3-methyl-2-oxobutanoate + (6R)-5,10-methylene-5,6,7,8-tetrahydrofolate + H2O = 2-dehydropantoate + (6S)-5,6,7,8-tetrahydrofolate. Its pathway is cofactor biosynthesis; (R)-pantothenate biosynthesis; (R)-pantoate from 3-methyl-2-oxobutanoate: step 1/2. In terms of biological role, catalyzes the reversible reaction in which hydroxymethyl group from 5,10-methylenetetrahydrofolate is transferred onto alpha-ketoisovalerate to form ketopantoate. This is 3-methyl-2-oxobutanoate hydroxymethyltransferase from Chromohalobacter salexigens (strain ATCC BAA-138 / DSM 3043 / CIP 106854 / NCIMB 13768 / 1H11).